Consider the following 376-residue polypeptide: C-type lectin domain family 4 member M (376 aa).

Topologically, residues M1–G49 are cytoplasmic. Residues L14–L15 carry the Endocytosis signal motif. A helical; Signal-anchor for type II membrane protein membrane pass occupies residues A50–V70. The Extracellular segment spans residues Q71 to E376. An N-linked (GlcNAc...) asparagine glycan is attached at N92. 6 repeat units span residues K108–S130, K131–S153, K154–S176, K177–S199, K200–S222, and K223–C245. Positions K108–P246 are 6 X approximate tandem repeats. 4 cysteine pairs are disulfide-bonded: C242–C372, C245–C256, C273–C366, and C345–C358. Residues F251–K367 enclose the C-type lectin domain. Ca(2+) is bound by residues E336, N338, S340, E343, N354, and D355. An N-linked (GlcNAc...) asparagine glycan is attached at N338.

As to quaternary structure, homotetramer.

It is found in the membrane. Its function is as follows. Probable pathogen-recognition receptor involved in peripheral immune surveillance in liver. May mediate the endocytosis of pathogens which are subsequently degraded in lysosomal compartments. Probably recognizes in a calcium-dependent manner high mannose N-linked oligosaccharides in a variety of pathogen antigens. Is a receptor for ICAM3, probably by binding to mannose-like carbohydrates. This chain is C-type lectin domain family 4 member M (CLEC4M), found in Gorilla gorilla gorilla (Western lowland gorilla).